The sequence spans 421 residues: uncharacterized protein (421 aa).

A TRAM domain is found at 14 to 72 (DLTKGDTITVEVTRPAHGGEGIAHHGGRVIFVRGGFPGDDVDVEITQVKKRFARGFVVQ). S-adenosyl-L-methionine is bound by residues glutamine 250, tyrosine 286, glutamate 308, and aspartate 349. Residue cysteine 376 is the Nucleophile of the active site.

This sequence belongs to the class I-like SAM-binding methyltransferase superfamily. RNA M5U methyltransferase family.

This is an uncharacterized protein from Corynebacterium efficiens (strain DSM 44549 / YS-314 / AJ 12310 / JCM 11189 / NBRC 100395).